A 55-amino-acid polypeptide reads, in one-letter code: Probable Rubredoxin-2 (55 aa).

In terms of domain architecture, Rubredoxin-like spans 4–54 (MARYQCMCGWVYDEDKGEPSQNIPPGTKFEDLPDTFRCPQCGLGKNAFRKI). Fe cation is bound by residues Cys-9, Cys-11, Cys-41, and Cys-44.

Belongs to the rubredoxin family. Requires Fe(3+) as cofactor.

In terms of biological role, rubredoxin is a small nonheme, iron protein lacking acid-labile sulfide. Its single Fe, chelated to 4 Cys, functions as an electron acceptor and may also stabilize the conformation of the molecule. The sequence is that of Probable Rubredoxin-2 from Methanocaldococcus jannaschii (strain ATCC 43067 / DSM 2661 / JAL-1 / JCM 10045 / NBRC 100440) (Methanococcus jannaschii).